The primary structure comprises 389 residues: Acetyl-CoA decarbonylase/synthase complex subunit delta (389 aa).

It belongs to the CdhD family. As to quaternary structure, heterodimer of delta and gamma chains. The ACDS complex is made up of alpha, epsilon, beta, gamma and delta chains with a probable stoichiometry of (alpha(2)epsilon(2))(4)-beta(8)-(gamma(1)delta(1))(8).

Part of a complex that catalyzes the reversible cleavage of acetyl-CoA, allowing autotrophic growth from CO(2). Probably maintains the overall quaternary structure of the ACDS complex. The sequence is that of Acetyl-CoA decarbonylase/synthase complex subunit delta from Methanothermobacter thermautotrophicus (strain ATCC 29096 / DSM 1053 / JCM 10044 / NBRC 100330 / Delta H) (Methanobacterium thermoautotrophicum).